The following is a 330-amino-acid chain: Phosphate acyltransferase (330 aa).

Belongs to the PlsX family. In terms of assembly, homodimer. Probably interacts with PlsY.

It is found in the cytoplasm. The catalysed reaction is a fatty acyl-[ACP] + phosphate = an acyl phosphate + holo-[ACP]. The protein operates within lipid metabolism; phospholipid metabolism. Functionally, catalyzes the reversible formation of acyl-phosphate (acyl-PO(4)) from acyl-[acyl-carrier-protein] (acyl-ACP). This enzyme utilizes acyl-ACP as fatty acyl donor, but not acyl-CoA. The sequence is that of Phosphate acyltransferase from Bacillus cereus (strain ATCC 14579 / DSM 31 / CCUG 7414 / JCM 2152 / NBRC 15305 / NCIMB 9373 / NCTC 2599 / NRRL B-3711).